An 843-amino-acid polypeptide reads, in one-letter code: Protein PLASTID MOVEMENT IMPAIRED 1 (843 aa).

Polar residues predominate over residues 30–58 (PQVSVGNRRTNSLALPRSSVPSLVTSADE). Disordered regions lie at residues 30–65 (PQVS…ARAE) and 88–116 (LEVE…SGVK). Positions 131–284 (LVRIGMQKLS…ELALKLGFQI (154 aa)) constitute a C2 NT-type domain. Disordered regions lie at residues 300–412 (FGMK…GTIG) and 450–472 (MMKD…EEEQ). Polar residues predominate over residues 307-336 (KPKNFANSFGRKQSKTSFSVPSPKMTSRSE). 2 positions are modified to phosphoserine: serine 314 and serine 328. Over residues 365-381 (PEEKPVQKNDKPEQRAE) the composition is skewed to basic and acidic residues. The residue at position 404 (threonine 404) is a Phosphothreonine. Phosphoserine is present on serine 407. Threonine 410 carries the post-translational modification Phosphothreonine. Residues 456 to 472 (DGGDGETESQRLDEEEQ) show a composition bias toward acidic residues. Serine 507 is subject to Phosphoserine.

Expressed in leaves, stems, cauline leaves, and flowers but not in roots. Present in leaves in both mesophyll and pavement cells.

The protein localises to the cytoplasm. Necessary for chloroplast and nuclear photorelocation movements via the regulation of chloroplast-actin (cp-actin) filaments in mesophyll cells, and together with PMIR1, in pavement cells. Required component for both the low- and high-light-dependent chloroplast movement responses via an abscisic acid (ABA) pathway. Involved in the ABA response pathway during seed germination. Modulates ABA accumulation during periods of water deficit at the seedling stage. In Arabidopsis thaliana (Mouse-ear cress), this protein is Protein PLASTID MOVEMENT IMPAIRED 1.